The following is a 570-amino-acid chain: Dihydroxy-acid dehydratase (570 aa).

The segment at 1–25 (MSQQDSPANADHRRRHSSIVVDGPG) is disordered. Cys60 is a binding site for [2Fe-2S] cluster. Residue Asp92 coordinates Mg(2+). Cys133 contributes to the [2Fe-2S] cluster binding site. Positions 134 and 135 each coordinate Mg(2+). An N6-carboxylysine modification is found at Lys135. Cys202 contributes to the [2Fe-2S] cluster binding site. Glu453 contributes to the Mg(2+) binding site. Ser479 serves as the catalytic Proton acceptor.

This sequence belongs to the IlvD/Edd family. In terms of assembly, homodimer. The cofactor is [2Fe-2S] cluster. Mg(2+) serves as cofactor.

It catalyses the reaction (2R)-2,3-dihydroxy-3-methylbutanoate = 3-methyl-2-oxobutanoate + H2O. It carries out the reaction (2R,3R)-2,3-dihydroxy-3-methylpentanoate = (S)-3-methyl-2-oxopentanoate + H2O. It participates in amino-acid biosynthesis; L-isoleucine biosynthesis; L-isoleucine from 2-oxobutanoate: step 3/4. It functions in the pathway amino-acid biosynthesis; L-valine biosynthesis; L-valine from pyruvate: step 3/4. Its function is as follows. Functions in the biosynthesis of branched-chain amino acids. Catalyzes the dehydration of (2R,3R)-2,3-dihydroxy-3-methylpentanoate (2,3-dihydroxy-3-methylvalerate) into 2-oxo-3-methylpentanoate (2-oxo-3-methylvalerate) and of (2R)-2,3-dihydroxy-3-methylbutanoate (2,3-dihydroxyisovalerate) into 2-oxo-3-methylbutanoate (2-oxoisovalerate), the penultimate precursor to L-isoleucine and L-valine, respectively. This Chromohalobacter salexigens (strain ATCC BAA-138 / DSM 3043 / CIP 106854 / NCIMB 13768 / 1H11) protein is Dihydroxy-acid dehydratase.